The chain runs to 362 residues: Probable branched-chain-amino-acid aminotransferase (362 aa).

The residue at position 202 (Lys-202) is an N6-(pyridoxal phosphate)lysine.

Belongs to the class-IV pyridoxal-phosphate-dependent aminotransferase family. Requires pyridoxal 5'-phosphate as cofactor.

It carries out the reaction L-leucine + 2-oxoglutarate = 4-methyl-2-oxopentanoate + L-glutamate. It catalyses the reaction L-isoleucine + 2-oxoglutarate = (S)-3-methyl-2-oxopentanoate + L-glutamate. The enzyme catalyses L-valine + 2-oxoglutarate = 3-methyl-2-oxobutanoate + L-glutamate. The protein operates within amino-acid biosynthesis; L-isoleucine biosynthesis; L-isoleucine from 2-oxobutanoate: step 4/4. It functions in the pathway amino-acid biosynthesis; L-leucine biosynthesis; L-leucine from 3-methyl-2-oxobutanoate: step 4/4. Its pathway is amino-acid biosynthesis; L-valine biosynthesis; L-valine from pyruvate: step 4/4. Its function is as follows. Acts on leucine, isoleucine and valine. This is Probable branched-chain-amino-acid aminotransferase (ilvE) from Streptomyces coelicolor (strain ATCC BAA-471 / A3(2) / M145).